We begin with the raw amino-acid sequence, 203 residues long: Proteasome subunit beta 2 (203 aa).

A propeptide spans 1–9 (MGEEVQIGA) (removed in mature form; by autocatalysis). T10 serves as the catalytic Nucleophile.

Belongs to the peptidase T1B family. As to quaternary structure, the 20S proteasome core is composed of 14 alpha and 14 beta subunits that assemble into four stacked heptameric rings, resulting in a barrel-shaped structure. The two inner rings, each composed of seven catalytic beta subunits, are sandwiched by two outer rings, each composed of seven alpha subunits. The catalytic chamber with the active sites is on the inside of the barrel. Has a gated structure, the ends of the cylinder being occluded by the N-termini of the alpha-subunits. Is capped at one or both ends by the proteasome regulatory ATPase, PAN.

Its subcellular location is the cytoplasm. The enzyme catalyses Cleavage of peptide bonds with very broad specificity.. Its activity is regulated as follows. The formation of the proteasomal ATPase PAN-20S proteasome complex, via the docking of the C-termini of PAN into the intersubunit pockets in the alpha-rings, triggers opening of the gate for substrate entry. Interconversion between the open-gate and close-gate conformations leads to a dynamic regulation of the 20S proteasome proteolysis activity. Component of the proteasome core, a large protease complex with broad specificity involved in protein degradation. In Pyrobaculum aerophilum (strain ATCC 51768 / DSM 7523 / JCM 9630 / CIP 104966 / NBRC 100827 / IM2), this protein is Proteasome subunit beta 2.